The chain runs to 287 residues: Bifunctional protein FolD (287 aa).

NADP(+) contacts are provided by residues Gly-171–Ser-173 and Ile-237.

It belongs to the tetrahydrofolate dehydrogenase/cyclohydrolase family. In terms of assembly, homodimer.

It catalyses the reaction (6R)-5,10-methylene-5,6,7,8-tetrahydrofolate + NADP(+) = (6R)-5,10-methenyltetrahydrofolate + NADPH. The enzyme catalyses (6R)-5,10-methenyltetrahydrofolate + H2O = (6R)-10-formyltetrahydrofolate + H(+). It participates in one-carbon metabolism; tetrahydrofolate interconversion. Functionally, catalyzes the oxidation of 5,10-methylenetetrahydrofolate to 5,10-methenyltetrahydrofolate and then the hydrolysis of 5,10-methenyltetrahydrofolate to 10-formyltetrahydrofolate. The protein is Bifunctional protein FolD of Methanosarcina barkeri (strain Fusaro / DSM 804).